Consider the following 215-residue polypeptide: MKNKILDLRAYFIAGPQDFPKLSIDDAIDKISVIIKSGVTVYQFRDKGTIYKNKNQRLEVAKRLQEVAQKAAVSFIVNDDVELARELSADGIHVGQDDDSVSKIRELIGQEMWVGLSVSNDMELESAQKSGADYLGIGPIYPTNSKSDAAEPIGVDHLRKMLEHNQLPTVGIGGITENSLTELSKIGLGGVAVISLLTESENYKNMVQKIKQNIR.

4-amino-2-methyl-5-(diphosphooxymethyl)pyrimidine contacts are provided by residues 43-47 (QFRDK) and Asn-78. Mg(2+) contacts are provided by Asp-79 and Asp-98. Residue Ser-117 coordinates 4-amino-2-methyl-5-(diphosphooxymethyl)pyrimidine. 143–145 (TNS) contacts 2-[(2R,5Z)-2-carboxy-4-methylthiazol-5(2H)-ylidene]ethyl phosphate. Lys-146 serves as a coordination point for 4-amino-2-methyl-5-(diphosphooxymethyl)pyrimidine. 2-[(2R,5Z)-2-carboxy-4-methylthiazol-5(2H)-ylidene]ethyl phosphate-binding positions include Gly-174 and 194–195 (IS).

This sequence belongs to the thiamine-phosphate synthase family. Mg(2+) serves as cofactor.

The catalysed reaction is 2-[(2R,5Z)-2-carboxy-4-methylthiazol-5(2H)-ylidene]ethyl phosphate + 4-amino-2-methyl-5-(diphosphooxymethyl)pyrimidine + 2 H(+) = thiamine phosphate + CO2 + diphosphate. The enzyme catalyses 2-(2-carboxy-4-methylthiazol-5-yl)ethyl phosphate + 4-amino-2-methyl-5-(diphosphooxymethyl)pyrimidine + 2 H(+) = thiamine phosphate + CO2 + diphosphate. It carries out the reaction 4-methyl-5-(2-phosphooxyethyl)-thiazole + 4-amino-2-methyl-5-(diphosphooxymethyl)pyrimidine + H(+) = thiamine phosphate + diphosphate. It participates in cofactor biosynthesis; thiamine diphosphate biosynthesis; thiamine phosphate from 4-amino-2-methyl-5-diphosphomethylpyrimidine and 4-methyl-5-(2-phosphoethyl)-thiazole: step 1/1. Condenses 4-methyl-5-(beta-hydroxyethyl)thiazole monophosphate (THZ-P) and 2-methyl-4-amino-5-hydroxymethyl pyrimidine pyrophosphate (HMP-PP) to form thiamine monophosphate (TMP). The sequence is that of Thiamine-phosphate synthase from Lactococcus lactis subsp. lactis (strain IL1403) (Streptococcus lactis).